Consider the following 143-residue polypeptide: Transcriptional regulator MraZ (143 aa).

SpoVT-AbrB domains lie at 5–47 (TYAP…SQRE) and 76–119 (ASAE…DAEA).

It belongs to the MraZ family. In terms of assembly, forms oligomers.

Its subcellular location is the cytoplasm. It is found in the nucleoid. In Leifsonia xyli subsp. xyli (strain CTCB07), this protein is Transcriptional regulator MraZ.